The primary structure comprises 536 residues: Zinc finger protein 623 (536 aa).

A disordered region spans residues 57 to 77 (GELLGNPEGQSLGSSPSQDRG). The segment covering 64-74 (EGQSLGSSPSQ) has biased composition (polar residues). 13 C2H2-type zinc fingers span residues 123–145 (NPCDICGKTFTFNSDLVRHRISH), 151–173 (YTCDQCGKGFGQSSHLMEHQRIH), 179–201 (YVCNVCGKDFIHYSGLIEHQRVH), 207–229 (FKCAQCGKAFCHSSDLIRHQRVH), 235–257 (FECKECGKGFSQSSLLIRHQRIH), 263–285 (YECNECGKSFIRSSSLIRHYQIH), 291–313 (YECKECGKAFRHRSDLIEHQRIH), 319–341 (FECNECGKAFIRSSKLIQHQRIH), 347–369 (YVCNECGKRFSQTSNFTQHQRIH), 375–397 (YECNECGKAFFLSSYLIRHQKIH), 403–425 (YECKECGKAFLQKAHLTEHQKIH), 431–453 (FECKDCGKAFIQSSKLLLHQIIH), and 459–481 (YVCSYCGKGFIQRSNFLQHQKIH). K445 is covalently cross-linked (Glycyl lysine isopeptide (Lys-Gly) (interchain with G-Cter in SUMO2)). Positions 513–536 (LSLSKAPIHLGERSVDKGEHTGNL) are disordered. A compositionally biased stretch (basic and acidic residues) spans 522–536 (LGERSVDKGEHTGNL).

Belongs to the krueppel C2H2-type zinc-finger protein family.

The protein localises to the nucleus. Functionally, may be involved in transcriptional regulation. The protein is Zinc finger protein 623 (ZNF623) of Homo sapiens (Human).